Reading from the N-terminus, the 538-residue chain is MFRRNLITSAILLMAPLAFSAQSLAESLTVEQRLELLEKALRETQSELKKYKDEEKKKYTPATVNRSVSTNDQGYAANPFPTSSAAKPDAVLVKNEEKNASETGSIYSSMTLKDFSKFVKDEIGFSYNGYYRSGWGTASHGSPKSWAIGSLGRFGNEYSGWFDLQLKQRVYNENGKRVDAVVMMDGNVGQQYSTGWFGDNAGGENFMQFSDMYVTTKGFLPFAPEADFWVGKHGAPKIEIQMLDWKTQRTDAAAGVGLENWKVGPGKIDIALVREDVDDYDRSLQNKQQINTNTIDLRYKDIPLWDKATLMVSGRYVTANESASEKDNQDNNGYYDWKDTWMFGTSLTQKFDKGGFNEFSFLVANNSIASNFGRYAGASPFTTFNGRYYGDHTGGTAVRLTSQGEAYIGDHFIVANAIVYSFGNDIYSYETGAHSDFESIRAVVRPAYIWDQYNQTGVELGYFTQQNKDANSNKFNESGYKTTLFHTFKVNTSMLTSRPEIRFYATYIKALENELDGFTFEDNKDDQFAVGAQAEIWW.

A signal peptide spans 1–25 (MFRRNLITSAILLMAPLAFSAQSLA). The segment at 52 to 82 (KDEEKKKYTPATVNRSVSTNDQGYAANPFPT) is disordered. Residues 62–73 (ATVNRSVSTNDQ) are compositionally biased toward polar residues.

This sequence belongs to the porin LamB (TC 1.B.3) family.

It localises to the cell outer membrane. In terms of biological role, may be a sugar porin with a broad carbohydrate specificity. The sequence is that of Putative outer membrane porin BglH (bglH) from Shigella sonnei (strain Ss046).